We begin with the raw amino-acid sequence, 663 residues long: Transketolase 2 (663 aa).

Substrate is bound at residue H25. Thiamine diphosphate-binding positions include H65 and 113-115; that span reads GPL. D154 provides a ligand contact to Mg(2+). Thiamine diphosphate contacts are provided by G155 and N184. The Mg(2+) site is built by N184 and I186. Residues H259, R356, and S383 each contribute to the substrate site. H259 contributes to the thiamine diphosphate binding site. E410 serves as the catalytic Proton donor. F436 contributes to the thiamine diphosphate binding site. The substrate site is built by H460, D468, and R519.

Belongs to the transketolase family. In terms of assembly, homodimer. Requires Mg(2+) as cofactor. The cofactor is Ca(2+). It depends on Mn(2+) as a cofactor. Co(2+) serves as cofactor. Thiamine diphosphate is required as a cofactor.

The enzyme catalyses D-sedoheptulose 7-phosphate + D-glyceraldehyde 3-phosphate = aldehydo-D-ribose 5-phosphate + D-xylulose 5-phosphate. Its function is as follows. Catalyzes the transfer of a two-carbon ketol group from a ketose donor to an aldose acceptor, via a covalent intermediate with the cofactor thiamine pyrophosphate. The protein is Transketolase 2 (tkt2) of Vibrio parahaemolyticus serotype O3:K6 (strain RIMD 2210633).